Here is a 199-residue protein sequence, read N- to C-terminus: dITP/XTP pyrophosphatase (199 aa).

8-13 (TSNINK) provides a ligand contact to substrate. D68 serves as the catalytic Proton acceptor. D68 is a Mg(2+) binding site. Residues S69, 155-158 (FGYN), K177, and 182-183 (HR) each bind substrate.

The protein belongs to the HAM1 NTPase family. As to quaternary structure, homodimer. The cofactor is Mg(2+).

The catalysed reaction is XTP + H2O = XMP + diphosphate + H(+). It catalyses the reaction dITP + H2O = dIMP + diphosphate + H(+). The enzyme catalyses ITP + H2O = IMP + diphosphate + H(+). In terms of biological role, pyrophosphatase that catalyzes the hydrolysis of nucleoside triphosphates to their monophosphate derivatives, with a high preference for the non-canonical purine nucleotides XTP (xanthosine triphosphate), dITP (deoxyinosine triphosphate) and ITP. Seems to function as a house-cleaning enzyme that removes non-canonical purine nucleotides from the nucleotide pool, thus preventing their incorporation into DNA/RNA and avoiding chromosomal lesions. In Borrelia recurrentis (strain A1), this protein is dITP/XTP pyrophosphatase.